The sequence spans 217 residues: Ribonuclease HII (217 aa).

The 190-residue stretch at 27 to 216 folds into the RNase H type-2 domain; that stretch reads SQVAGVDEAG…VKESIQEGVC (190 aa). 3 residues coordinate a divalent metal cation: aspartate 33, glutamate 34, and aspartate 126.

This sequence belongs to the RNase HII family. The cofactor is Mn(2+). Mg(2+) serves as cofactor.

It is found in the cytoplasm. It catalyses the reaction Endonucleolytic cleavage to 5'-phosphomonoester.. Functionally, endonuclease that specifically degrades the RNA of RNA-DNA hybrids. The protein is Ribonuclease HII (rnhB) of Chlamydia trachomatis serovar D (strain ATCC VR-885 / DSM 19411 / UW-3/Cx).